The sequence spans 436 residues: Elongation factor 1-gamma-A (436 aa).

The GST N-terminal domain occupies 2–87; sequence AGGTLYTYPD…YVGNDELRGT (86 aa). Residues 88 to 221 enclose the GST C-terminal domain; that stretch reads TRLHQAQVIQ…KMAQFDAKKF (134 aa). Composition is skewed to basic and acidic residues over residues 221 to 249 and 265 to 278; these read FAEM…EKKK and SEKA…SKDP. Residues 221–278 are disordered; the sequence is FAEMQPKKETPKKEKPAKEPKKEKEEKKKAAPTPAPAPEDDLDESEKALAAEPKSKDP. The region spanning 275–436 is the EF-1-gamma C-terminal domain; the sequence is SKDPYAHLPK…KPFNQGKIFK (162 aa).

As to quaternary structure, EF-1 is composed of four subunits: alpha, beta, delta, and gamma. Post-translationally, phosphorylated by CDK1. The N-terminus is blocked.

Functionally, probably plays a role in anchoring the complex to other cellular components. In Xenopus laevis (African clawed frog), this protein is Elongation factor 1-gamma-A (eef1g-a).